A 175-amino-acid polypeptide reads, in one-letter code: ATP synthase subunit b 2 (175 aa).

The chain crosses the membrane as a helical span at residues 20 to 40; the sequence is LIFWTTITFVLVLIILKKIAW.

It belongs to the ATPase B chain family. F-type ATPases have 2 components, F(1) - the catalytic core - and F(0) - the membrane proton channel. F(1) has five subunits: alpha(3), beta(3), gamma(1), delta(1), epsilon(1). F(0) has four main subunits: a(1), b(2) and c(10-14). The alpha and beta chains form an alternating ring which encloses part of the gamma chain. F(1) is attached to F(0) by a central stalk formed by the gamma and epsilon chains, while a peripheral stalk is formed by the delta and b chains.

The protein resides in the cell inner membrane. F(1)F(0) ATP synthase produces ATP from ADP in the presence of a proton or sodium gradient. F-type ATPases consist of two structural domains, F(1) containing the extramembraneous catalytic core and F(0) containing the membrane proton channel, linked together by a central stalk and a peripheral stalk. During catalysis, ATP synthesis in the catalytic domain of F(1) is coupled via a rotary mechanism of the central stalk subunits to proton translocation. Functionally, component of the F(0) channel, it forms part of the peripheral stalk, linking F(1) to F(0). This is ATP synthase subunit b 2 from Chlorobium luteolum (strain DSM 273 / BCRC 81028 / 2530) (Pelodictyon luteolum).